A 199-amino-acid chain; its full sequence is Holliday junction branch migration complex subunit RuvA (199 aa).

The tract at residues 1 to 64 is domain I; that stretch reads MIALLTGRLA…EDSISLFGFR (64 aa). A domain II region spans residues 65–143; the sequence is TLAEKEFFQL…KMDVAPSAQE (79 aa). The flexible linker stretch occupies residues 144-154; the sequence is APSSEAPAEVA. Residues 154 to 199 form a domain III region; it reads ADDVASALVNLGYKEAVVRKVLAEMSIEPDASTEAVLRQALKVLMK.

The protein belongs to the RuvA family. In terms of assembly, homotetramer. Forms an RuvA(8)-RuvB(12)-Holliday junction (HJ) complex. HJ DNA is sandwiched between 2 RuvA tetramers; dsDNA enters through RuvA and exits via RuvB. An RuvB hexamer assembles on each DNA strand where it exits the tetramer. Each RuvB hexamer is contacted by two RuvA subunits (via domain III) on 2 adjacent RuvB subunits; this complex drives branch migration. In the full resolvosome a probable DNA-RuvA(4)-RuvB(12)-RuvC(2) complex forms which resolves the HJ.

The protein resides in the cytoplasm. Functionally, the RuvA-RuvB-RuvC complex processes Holliday junction (HJ) DNA during genetic recombination and DNA repair, while the RuvA-RuvB complex plays an important role in the rescue of blocked DNA replication forks via replication fork reversal (RFR). RuvA specifically binds to HJ cruciform DNA, conferring on it an open structure. The RuvB hexamer acts as an ATP-dependent pump, pulling dsDNA into and through the RuvAB complex. HJ branch migration allows RuvC to scan DNA until it finds its consensus sequence, where it cleaves and resolves the cruciform DNA. This is Holliday junction branch migration complex subunit RuvA from Geobacter sulfurreducens (strain ATCC 51573 / DSM 12127 / PCA).